Reading from the N-terminus, the 200-residue chain is Glycerol-3-phosphate acyltransferase (200 aa).

4 helical membrane passes run 1 to 21 (MITV…FAVV), 84 to 104 (VIAG…FLAF), 116 to 136 (ILLG…MVVA), and 159 to 179 (FLLE…LLIL).

The protein belongs to the PlsY family. Probably interacts with PlsX.

It localises to the cell inner membrane. It catalyses the reaction an acyl phosphate + sn-glycerol 3-phosphate = a 1-acyl-sn-glycero-3-phosphate + phosphate. Its pathway is lipid metabolism; phospholipid metabolism. In terms of biological role, catalyzes the transfer of an acyl group from acyl-phosphate (acyl-PO(4)) to glycerol-3-phosphate (G3P) to form lysophosphatidic acid (LPA). This enzyme utilizes acyl-phosphate as fatty acyl donor, but not acyl-CoA or acyl-ACP. The polypeptide is Glycerol-3-phosphate acyltransferase (Nitrosomonas europaea (strain ATCC 19718 / CIP 103999 / KCTC 2705 / NBRC 14298)).